The primary structure comprises 189 residues: Peptidyl-tRNA hydrolase (189 aa).

Tyr-14 is a binding site for tRNA. The Proton acceptor role is filled by His-19. Residues Tyr-64, Asn-66, and Asn-112 each coordinate tRNA.

The protein belongs to the PTH family. Monomer.

It localises to the cytoplasm. It carries out the reaction an N-acyl-L-alpha-aminoacyl-tRNA + H2O = an N-acyl-L-amino acid + a tRNA + H(+). In terms of biological role, hydrolyzes ribosome-free peptidyl-tRNAs (with 1 or more amino acids incorporated), which drop off the ribosome during protein synthesis, or as a result of ribosome stalling. Catalyzes the release of premature peptidyl moieties from peptidyl-tRNA molecules trapped in stalled 50S ribosomal subunits, and thus maintains levels of free tRNAs and 50S ribosomes. The chain is Peptidyl-tRNA hydrolase from Clostridium botulinum (strain Kyoto / Type A2).